The following is a 231-amino-acid chain: NADH-ubiquinone oxidoreductase chain 4 (231 aa).

The next 7 helical transmembrane spans lie at 1–21 (PIAG…YGII), 34–54 (VFLP…LTCL), 63–85 (IAYS…TPWG), 89–111 (AMAL…NTTY), 128–148 (MMPM…AIPP), 169–189 (TIIM…HMFL), and 211–231 (LLMT…ELVT).

The protein belongs to the complex I subunit 4 family.

The protein localises to the mitochondrion membrane. It carries out the reaction a ubiquinone + NADH + 5 H(+)(in) = a ubiquinol + NAD(+) + 4 H(+)(out). Functionally, core subunit of the mitochondrial membrane respiratory chain NADH dehydrogenase (Complex I) that is believed to belong to the minimal assembly required for catalysis. Complex I functions in the transfer of electrons from NADH to the respiratory chain. The immediate electron acceptor for the enzyme is believed to be ubiquinone. The chain is NADH-ubiquinone oxidoreductase chain 4 (MT-ND4) from Sistrurus miliarius (Pigmy rattlesnake).